Consider the following 49-residue polypeptide: Large ribosomal subunit protein bL33 (49 aa).

It belongs to the bacterial ribosomal protein bL33 family.

In Alkaliphilus metalliredigens (strain QYMF), this protein is Large ribosomal subunit protein bL33.